The sequence spans 207 residues: 2,3-bisphosphoglycerate-dependent phosphoglycerate mutase (207 aa).

Residues Arg10–Asn17, Thr23–Gly24, Arg62, Glu89–Tyr92, Lys100, Arg116–Arg117, and Gly160–Asn161 each bind substrate. The Tele-phosphohistidine intermediate role is filled by His11. Catalysis depends on Glu89, which acts as the Proton donor/acceptor.

It belongs to the phosphoglycerate mutase family. BPG-dependent PGAM subfamily. Homodimer.

It catalyses the reaction (2R)-2-phosphoglycerate = (2R)-3-phosphoglycerate. The protein operates within carbohydrate degradation; glycolysis; pyruvate from D-glyceraldehyde 3-phosphate: step 3/5. Catalyzes the interconversion of 2-phosphoglycerate and 3-phosphoglycerate. This is 2,3-bisphosphoglycerate-dependent phosphoglycerate mutase from Afipia carboxidovorans (strain ATCC 49405 / DSM 1227 / KCTC 32145 / OM5) (Oligotropha carboxidovorans).